The chain runs to 267 residues: Type II pantothenate kinase (267 aa).

Position 6–13 (6–13 (DAGGTLIK)) interacts with ATP. E70 acts as the Proton acceptor in catalysis. ATP contacts are provided by residues T99, 121-125 (GGMIQ), Y137, and S225.

Belongs to the type II pantothenate kinase family. Homodimer.

It localises to the cytoplasm. It catalyses the reaction (R)-pantothenate + ATP = (R)-4'-phosphopantothenate + ADP + H(+). It participates in cofactor biosynthesis; coenzyme A biosynthesis; CoA from (R)-pantothenate: step 1/5. Catalyzes the phosphorylation of pantothenate (Pan), the first step in CoA biosynthesis. The polypeptide is Type II pantothenate kinase (Staphylococcus aureus (strain bovine RF122 / ET3-1)).